We begin with the raw amino-acid sequence, 299 residues long: Glycine--tRNA ligase alpha subunit (299 aa).

Belongs to the class-II aminoacyl-tRNA synthetase family. As to quaternary structure, tetramer of two alpha and two beta subunits.

The protein localises to the cytoplasm. The catalysed reaction is tRNA(Gly) + glycine + ATP = glycyl-tRNA(Gly) + AMP + diphosphate. This is Glycine--tRNA ligase alpha subunit from Dichelobacter nodosus (strain VCS1703A).